The chain runs to 1390 residues: Hepatocyte growth factor receptor (1390 aa).

The N-terminal stretch at Met-1–Gly-24 is a signal peptide. At Glu-25 to Thr-932 the chain is on the extracellular side. The region spanning Lys-27–Leu-515 is the Sema domain. Residue Asn-45 is glycosylated (N-linked (GlcNAc...) asparagine). Intrachain disulfides connect Cys-95–Cys-101, Cys-98–Cys-160, Cys-133–Cys-141, and Cys-172–Cys-175. Residue Asn-106 is glycosylated (N-linked (GlcNAc...) asparagine). An N-linked (GlcNAc...) asparagine glycan is attached at Asn-149. N-linked (GlcNAc...) asparagine glycosylation occurs at Asn-202. Disulfide bonds link Cys-298-Cys-363 and Cys-385-Cys-397. N-linked (GlcNAc...) asparagine glycans are attached at residues Asn-399 and Asn-405. Intrachain disulfides connect Cys-520/Cys-538, Cys-526/Cys-561, Cys-529/Cys-545, and Cys-541/Cys-551. 3 IPT/TIG domains span residues Pro-563–Val-655, Pro-657–Arg-739, and Pro-742–Val-836. O-linked (Man) threonine glycosylation is present at Thr-582. Residues Asn-607 and Asn-635 are each glycosylated (N-linked (GlcNAc...) asparagine). O-linked (Man) threonine glycans are attached at residues Thr-676 and Thr-761. Asn-785, Asn-879, and Asn-930 each carry an N-linked (GlcNAc...) asparagine glycan. The helical transmembrane segment at Gly-933–Leu-955 threads the bilayer. Over Lys-956–Ser-1390 the chain is Cytoplasmic. Ser-966 is subject to Phosphoserine. A Phosphothreonine modification is found at Thr-977. Ser-990, Ser-997, and Ser-1000 each carry phosphoserine. Tyr-1003 carries the post-translational modification Phosphotyrosine. Residues Val-1078–Ile-1345 enclose the Protein kinase domain. ATP contacts are provided by residues Ile-1084–Val-1092 and Lys-1110. Asp-1204 (proton acceptor) is an active-site residue. Residues Leu-1212 to Thr-1381 form an interaction with RANBP9 region. Tyr-1230 carries the phosphotyrosine modification. Phosphotyrosine; by autocatalysis is present on residues Tyr-1234 and Tyr-1235. Thr-1289 carries the post-translational modification Phosphothreonine. The segment at Trp-1320–Val-1359 is interaction with MUC20. 2 positions are modified to phosphotyrosine; by autocatalysis: Tyr-1349 and Tyr-1356. The residue at position 1365 (Tyr-1365) is a Phosphotyrosine.

Belongs to the protein kinase superfamily. Tyr protein kinase family. Heterodimer made of an alpha chain (50 kDa) and a beta chain (145 kDa) which are disulfide linked. Binds PLXNB1. Interacts when phosphorylated with downstream effectors including STAT3, PIK3R1, SRC, PCLG1, GRB2 and GAB1. Interacts with SPSB1, SPSB2 and SPSB4. Interacts with INPP5D/SHIP1. When phosphorylated at Tyr-1356, interacts with INPPL1/SHIP2. Interacts with RANBP9 and RANBP10, as well as SPSB1, SPSB2, SPSB3 and SPSB4. SPSB1 binding occurs in the presence and in the absence of HGF, however HGF treatment has a positive effect on this interaction. Interacts with MUC20; prevents interaction with GRB2 and suppresses hepatocyte growth factor-induced cell proliferation. Interacts with GRB10. Interacts with PTPN1 and PTPN2. Interacts with HSP90AA1 and HSP90AB1; the interaction suppresses MET kinase activity. Interacts with tensin TNS3. Interacts (when phosphorylated) with tensin TNS4 (via SH2 domain); the interaction increases MET protein stability by inhibiting MET endocytosis and subsequent lysosomal degradation. Post-translationally, autophosphorylated in response to ligand binding on Tyr-1234 and Tyr-1235 in the kinase domain leading to further phosphorylation of Tyr-1349 and Tyr-1356 in the C-terminal multifunctional docking site. Dephosphorylated by PTPRJ at Tyr-1349 and Tyr-1365. Dephosphorylated by PTPN1 and PTPN2. In terms of processing, ubiquitinated. Ubiquitination by CBL regulates the receptor stability and activity through proteasomal degradation. O-mannosylation of IPT/TIG domains by TMEM260 is required for protein maturation. O-mannosylated residues are composed of single mannose glycans that are not elongated or modified.

The protein resides in the membrane. It catalyses the reaction L-tyrosyl-[protein] + ATP = O-phospho-L-tyrosyl-[protein] + ADP + H(+). Its activity is regulated as follows. In its inactive state, the C-terminal tail interacts with the catalytic domain and inhibits the kinase activity. Upon ligand binding, the C-terminal tail is displaced and becomes phosphorylated, thus increasing the kinase activity. Its function is as follows. Receptor tyrosine kinase that transduces signals from the extracellular matrix into the cytoplasm by binding to hepatocyte growth factor/HGF ligand. Regulates many physiological processes including proliferation, scattering, morphogenesis and survival. Ligand binding at the cell surface induces autophosphorylation of MET on its intracellular domain that provides docking sites for downstream signaling molecules. Following activation by ligand, interacts with the PI3-kinase subunit PIK3R1, PLCG1, SRC, GRB2, STAT3 or the adapter GAB1. Recruitment of these downstream effectors by MET leads to the activation of several signaling cascades including the RAS-ERK, PI3 kinase-AKT, or PLCgamma-PKC. The RAS-ERK activation is associated with the morphogenetic effects while PI3K/AKT coordinates prosurvival effects. During embryonic development, MET signaling plays a role in gastrulation, development and migration of muscles and neuronal precursors, angiogenesis and kidney formation. In adults, participates in wound healing as well as organ regeneration and tissue remodeling. Also promotes differentiation and proliferation of hematopoietic cells. The chain is Hepatocyte growth factor receptor (MET) from Nomascus leucogenys (Northern white-cheeked gibbon).